Here is a 208-residue protein sequence, read N- to C-terminus: MGISRDSAHKRRATGGKRKSLRKKRKFELGRPAANTKLGSGRVHKVRTRGGNTKLRALRLETGNFAWASEGVARKTRIADVVYNASNNELVRTKTLVKNSIVVIDATPFRQWYEAHYVLPLGRKRNPKHAQKEDENDVLTKKRSEKVMKKYLERQKYGKVEQALEDQFTSGRILACISSRPGQCGRSDGYILEGKELEFYLKKIKSKK.

Positions 1 to 23 (MGISRDSAHKRRATGGKRKSLRK) are disordered. Positions 8 to 23 (AHKRRATGGKRKSLRK) are enriched in basic residues.

It belongs to the eukaryotic ribosomal protein eS8 family. In terms of assembly, component of the small ribosomal subunit. Identified in a IGF2BP1-dependent mRNP granule complex containing untranslated mRNAs. Part of the small subunit (SSU) processome, composed of more than 70 proteins and the RNA chaperone small nucleolar RNA (snoRNA) U3.

The protein localises to the cytoplasm. The protein resides in the membrane. It is found in the nucleus. Its subcellular location is the nucleolus. Functionally, component of the small ribosomal subunit. The ribosome is a large ribonucleoprotein complex responsible for the synthesis of proteins in the cell. Part of the small subunit (SSU) processome, first precursor of the small eukaryotic ribosomal subunit. During the assembly of the SSU processome in the nucleolus, many ribosome biogenesis factors, an RNA chaperone and ribosomal proteins associate with the nascent pre-rRNA and work in concert to generate RNA folding, modifications, rearrangements and cleavage as well as targeted degradation of pre-ribosomal RNA by the RNA exosome. The polypeptide is Small ribosomal subunit protein eS8 (RpS8) (Drosophila melanogaster (Fruit fly)).